The sequence spans 278 residues: uncharacterized protein (278 aa).

The next 10 helical transmembrane spans lie at methionine 1 to tyrosine 21, alanine 30 to leucine 50, valine 56 to isoleucine 76, isoleucine 92 to tyrosine 112, leucine 116 to glycine 136, leucine 146 to leucine 166, leucine 170 to threonine 190, glycine 209 to tryptophan 229, asparagine 230 to leucine 250, and leucine 258 to glutamine 278. EamA domains are found at residues isoleucine 12–glycine 136 and phenylalanine 154–leucine 274.

The protein belongs to the EamA transporter family.

It is found in the cell membrane. This is an uncharacterized protein from Archaeoglobus fulgidus (strain ATCC 49558 / DSM 4304 / JCM 9628 / NBRC 100126 / VC-16).